The chain runs to 1558 residues: ABC transporter NFT1 (1558 aa).

At 1 to 29 (MIKNGTCPFWERDDLSECARREYIEFKFP) the chain is on the extracellular side. Asn-4 carries N-linked (GlcNAc...) asparagine glycosylation. The chain crosses the membrane as a helical span at residues 30-50 (LFILLTGMIYAFCKVFRAFYL). The Cytoplasmic portion of the chain corresponds to 51–103 (RRKNHTNEAPEFEEQGNGNHEYARFSVLRLKSAWESRSFCNVNNRSTFDKFKK). Residues 104–124 (FIEGAFIVLQLTIHLYILSNM) form a helical membrane-spanning segment. Topologically, residues 125 to 130 (PMDNKK) are extracellular. A helical membrane pass occupies residues 131 to 151 (FFHQGFLVQMFLWILLLVVIT). The Cytoplasmic portion of the chain corresponds to 152–169 (LRLISASQSFRWVLACKR). The chain crosses the membrane as a helical span at residues 170–190 (DLWAVSFYSYASLFTLSILPL). At 191-201 (RSVFIGKIKDK) the chain is on the extracellular side. Residues 202-222 (IMVKYIISETFIDLALLLLLS) form a helical membrane-spanning segment. The Cytoplasmic portion of the chain corresponds to 223–302 (TSSIEGTRYS…SSKKGRLLPN (80 aa)). The chain crosses the membrane as a helical span at residues 303–323 (IICYFKAVFISQLFLAFVSSF). Residues 311 to 621 (FISQLFLAFV…IASTVSLLIQ (311 aa)) enclose the ABC transmembrane type-1 1 domain. Topologically, residues 324–351 (LNFVPSLLMPRILSYVNDPKSQSWNLVS) are extracellular. A helical transmembrane segment spans residues 352-374 (LYVSSMLVSKIIATTCRGQGLFL). At 375–449 (GEKGTMQLRT…VMSIDAFKVS (75 aa)) the chain is on the cytoplasmic side. Residues 410 to 434 (NASTSFEENPDSSEAEPRKKSSRKD) form a disordered region. The segment covering 424–434 (AEPRKKSSRKD) has biased composition (basic and acidic residues). The chain crosses the membrane as a helical span at residues 450–470 (EAMNTFYLACEAVFMTVTALM). Residues 471-481 (ILYSLLGWSAF) lie on the Extracellular side of the membrane. A helical transmembrane segment spans residues 482 to 504 (AGTFALLAMIPLNFWCATFYGNY). At 505–558 (QADQLILTDKRTSGISEALNSIRVIKLLAWENLFYQKIINVRDGEIRLLKKKAT) the chain is on the cytoplasmic side. Residues 559 to 579 (IFFLNHLIWFFGPTLVSAITF) form a helical membrane-spanning segment. The Extracellular portion of the chain corresponds to 580-584 (SVFIK). Residues 585–605 (FQNQTLTPTIAFTALSLFAIL) traverse the membrane as a helical segment. At 606-953 (RTPMDQIAST…KFSAYKWLAD (348 aa)) the chain is on the cytoplasmic side. The 242-residue stretch at 651–892 (FGFEDASMEW…NEFLRESINN (242 aa)) folds into the ABC transporter 1 domain. 686 to 693 (GPTGSGKS) serves as a coordination point for ATP. Positions 892 to 901 (NDSKNTTHNQ) are enriched in polar residues. The interval 892–926 (NDSKNTTHNQIDLKRSTTSKKTKNGDPEGENSQDE) is disordered. A helical membrane pass occupies residues 954–974 (YFGGLGVVFVFTSSAILIHGI). Positions 961–1251 (VFVFTSSAIL…IIKVFSSVEL (291 aa)) constitute an ABC transmembrane type-1 2 domain. Over 975–1013 (TLSQGFWLRYWLETGSSGSKSTWLYRIVEGHSNIYFILT) the chain is Extracellular. Residues 1014–1034 (YIVIGFVSSFLTSGKVWIAII) traverse the membrane as a helical segment. Residues 1035–1082 (SGTNVTKKIFAKLLSSILYAKLRFHNVTPTGRIMNRFSKDMDIIDQQL) are Cytoplasmic-facing. A helical transmembrane segment spans residues 1083–1105 (IPNFEGLSYSVVVCLWIILLIGY). Over 1106 to 1109 (VTPQ) the chain is Extracellular. A helical membrane pass occupies residues 1110–1132 (FLLFAIPLCALYYTVCTLYLRAS). The Cytoplasmic portion of the chain corresponds to 1133-1199 (RELKRIDNIN…ATEWITYRVD (67 aa)). A helical transmembrane segment spans residues 1200–1220 (IIGTLVLFSSSVMIIMKASYL). Over 1221–1222 (DA) the chain is Extracellular. The chain crosses the membrane as a helical span at residues 1223 to 1243 (GLAGILLSNAFSFTETAQWII). At 1244 to 1558 (KVFSSVELLM…LAKVSFDNKR (315 aa)) the chain is on the cytoplasmic side. One can recognise an ABC transporter 2 domain in the interval 1285–1538 (VELKNLSLRY…RNTIFYRLCR (254 aa)). 1319–1326 (GRTGAGKS) is a binding site for ATP.

The protein belongs to the ABC transporter superfamily. ABCC family. Conjugate transporter (TC 3.A.1.208) subfamily.

It localises to the membrane. In Saccharomyces cerevisiae (strain YJM789) (Baker's yeast), this protein is ABC transporter NFT1 (NFT1).